The primary structure comprises 257 residues: Uroporphyrinogen-III C-methyltransferase (257 aa).

Residues proline 11, 87–89, 117–118, and methionine 170 contribute to the S-adenosyl-L-homocysteine site; these read GGD and TS.

The protein belongs to the precorrin methyltransferase family.

The enzyme catalyses uroporphyrinogen III + 2 S-adenosyl-L-methionine = precorrin-2 + 2 S-adenosyl-L-homocysteine + H(+). Its pathway is cofactor biosynthesis; adenosylcobalamin biosynthesis; precorrin-2 from uroporphyrinogen III: step 1/1. It participates in porphyrin-containing compound metabolism; siroheme biosynthesis; precorrin-2 from uroporphyrinogen III: step 1/1. Functionally, catalyzes the two successive C-2 and C-7 methylation reactions involved in the conversion of uroporphyrinogen III to precorrin-2 via the intermediate formation of precorrin-1. It is a step in the biosynthesis of both cobalamin (vitamin B12) and siroheme. The polypeptide is Uroporphyrinogen-III C-methyltransferase (sumT) (Bacillus subtilis (strain 168)).